Reading from the N-terminus, the 594-residue chain is (-)-endo-fenchol synthase, chloroplastic (594 aa).

The N-terminal 50 residues, 1-50 (MSSLVMHVGIVNKPAITYLPTLSRRASNLHNVSSTRLQTSCSLQLDYKPV), are a transit peptide targeting the chloroplast. Residues Asp348, Asp352, Asp492, and Glu500 each coordinate Mg(2+). Positions 348–352 (DDIYD) match the DDXXD motif motif.

Belongs to the terpene synthase family. Tpsa subfamily. Requires Mg(2+) as cofactor. Mn(2+) is required as a cofactor. As to expression, expressed at low levels in leaves.

Its subcellular location is the plastid. The protein localises to the chloroplast. It carries out the reaction (2E)-geranyl diphosphate = alpha-pinene + diphosphate. The enzyme catalyses (2E)-geranyl diphosphate + H2O = (1S,2S,4R)-endo-fenchol + diphosphate. The catalysed reaction is (2E)-geranyl diphosphate = limonene + diphosphate. Its pathway is secondary metabolite biosynthesis; terpenoid biosynthesis. Its function is as follows. Monoterpene synthase involved in the biosynthesis of volatile compounds widely used in aromatherapy and folk medicine, and present in culinary herbs. Mediates the conversion of (2E)-geranyl diphosphate (GPP) into alpha fenchol, limonene and alpha-pinene and, as minor compounds, into beta-myrcene, alpha-terpinolene and alpha-phellandrene. This chain is (-)-endo-fenchol synthase, chloroplastic, found in Lavandula stoechas (Butterfly lavender).